A 280-amino-acid polypeptide reads, in one-letter code: Inner kinetochore subunit fta1 (280 aa).

The protein belongs to the CENP-L/IML3 family. Component of the inner kinetochore constitutive centromere-associated network (CCAN) (also known as central kinetochore Sim4 complex in fission yeast), which is composed of at least cnl2, cnp3, cnp20, fta1, fta2, fta3, fta4, fta6, fta7, mal2, mhf1, mhf2, mis6, mis15, mis17, sim4 and wip1.

The protein resides in the nucleus. It localises to the chromosome. The protein localises to the centromere. Its subcellular location is the kinetochore. In terms of biological role, component of the kinetochore, a multiprotein complex that assembles on centromeric DNA and attaches chromosomes to spindle microtubules, mediating chromosome segregation and sister chromatid segregation during meiosis and mitosis. Component of the inner kinetochore constitutive centromere-associated network (CCAN), which serves as a structural platform for outer kinetochore assembly. The sequence is that of Inner kinetochore subunit fta1 (fta1) from Schizosaccharomyces pombe (strain 972 / ATCC 24843) (Fission yeast).